The primary structure comprises 351 residues: Auxin-responsive protein IAA27 (351 aa).

The interval 1 to 37 (MMNLISFETPPLGRRSQDGGSSSSSITAATTTTNKAK) is disordered. Over residues 21-34 (SSSSSITAATTTTN) the composition is skewed to low complexity. The PB1 domain maps to 233–327 (NMFAKVHMDG…SAKRLYIAKN (95 aa)).

It belongs to the Aux/IAA family. Homodimers and heterodimers. As to expression, expressed in roots and seedlings.

The protein resides in the nucleus. Its function is as follows. Aux/IAA proteins are short-lived transcriptional factors that function as repressors of early auxin response genes at low auxin concentrations. The protein is Auxin-responsive protein IAA27 (IAA27) of Oryza sativa subsp. japonica (Rice).